Here is a 101-residue protein sequence, read N- to C-terminus: RNA-binding protein Hfq (101 aa).

The 60-residue stretch at 9-68 (DPYLNALRRERIPVSIYLVNGIKLQGQIESFDQFIILLKNTVSQMVYKHAISTVVPARSI) folds into the Sm domain. Positions 68–91 (ISHNNNGSSQAQAPQQAVQTTQPV) are disordered. Over residues 77–91 (QAQAPQQAVQTTQPV) the composition is skewed to low complexity.

This sequence belongs to the Hfq family. As to quaternary structure, homohexamer.

Functionally, RNA chaperone that binds small regulatory RNA (sRNAs) and mRNAs to facilitate mRNA translational regulation in response to envelope stress, environmental stress and changes in metabolite concentrations. Also binds with high specificity to tRNAs. The chain is RNA-binding protein Hfq from Haemophilus ducreyi (strain 35000HP / ATCC 700724).